The sequence spans 1297 residues: MLDVNFFDELRIGLATADDIRQWSHGEVKKPETINYRTLKPEKDGLFCEKIFGPQRDWECYCGKYKRVRFKGIICERCGVEVTRSKVRRERMGHIELAASVTHIWYFKGVPSRLGYLLDLAPKDLEKIIYFASYVVTSVDAEARHRDLATIENEILAEKRQSENSRDSEIEKRAGKLEADLAELEAEGAKADVRRKVKEGGEREMRQIRDRAQREIDRLDEVLDTFRKLEPKQLVTDELLYRELRDRFGEYFTGGMGAEAIKALVQNMDLDAEAESLRETIRTGKGQRKIRALKRLKVVAAFLNTRNSPLGMVLDCVPVIPPDLRPMVQLDGGRFATSDLNDLYRRVINRNNRLKRLIDLGAPEIIVNNEKRMLQEAVDALFDNGRRGRPVTGPGNRPLKSLSDMLKGKQGRFRQNLLGKRVDYSGRSVIVVGPKLKLHQCGLPKQMALELFKPFVMKRLVDLNHAQNIKSAKRMVERQRPVVWDVLEEVIGEHPVLLNRAPTLHRLGIQAFEPQLVEGKAIQIHPLVCTAFNADFDGDQMAVHVPLSAEAQAEARILMLSSNNILKPADGKPVTMPTQDMIIGLYHLTHRTSGERGEGRAFSSDAEARMAFDNGELHLQAPVKIRLRGLVGVETGPGAESWTAPEGWVEGDPITVETTLGRVLFNEALPPGYRFVNYEIRKGQLSAIVNDLAERFPKVALAATLDGLKEAGFHWATWSGVTIGMEDVLAPPRKREVLDRYEKEADRIDKQYQRGLMTAEERRGELIEIWTKATNEVAKEMDTALPQENPLWKMINSGARGNLLQLRQIAAIRGLVANPKGEIIPRPIKASYREGLSVLEYFISTHGARKGLADTALRTADSGYLTRRLVDVSQDVIIREEDCGTDRAIPMQVGQQTGEAGSLVVHEHAETSVHARTLADDIKGPDGTVVAERGADINSILVDRIVAAGVESVRVRSVLTCESKLGVCGACYGRSLPTGKTVDVGEAVGIIAAQSIGEPGTQLTMRTFHTGGVAGEDITQGLPRVQEIFEARIPKGKAPIADTPGRVRLEDGERSRKIIVVPDDGSDEIVYDKISKRVRLLANDGDHVEVGEKLTVGTIDPHELLRILGPRAVQVHLTQEVQEVYRSQGVLIHDKHIEIIIRQMLKRVTVIDSGSTEFLPGVLVDRALFESENRRLVSEGGEPAAGRPVLMGITKASLATDSWLSAASFQETTRVLTDAAIHARSDSLIGLKENVIIGKLIPAGTGISKYRNVRVEPTEEAKAKVYSMTGYPETDYGFGPASGQAVPLDDFDFGSYR.

Zn(2+) contacts are provided by cysteine 60, cysteine 62, cysteine 75, and cysteine 78. Mg(2+)-binding residues include aspartate 535, aspartate 537, and aspartate 539. The Zn(2+) site is built by cysteine 883, cysteine 961, cysteine 968, and cysteine 971.

It belongs to the RNA polymerase beta' chain family. As to quaternary structure, the RNAP catalytic core consists of 2 alpha, 1 beta, 1 beta' and 1 omega subunit. When a sigma factor is associated with the core the holoenzyme is formed, which can initiate transcription. Requires Mg(2+) as cofactor. Zn(2+) serves as cofactor.

The catalysed reaction is RNA(n) + a ribonucleoside 5'-triphosphate = RNA(n+1) + diphosphate. Functionally, DNA-dependent RNA polymerase catalyzes the transcription of DNA into RNA using the four ribonucleoside triphosphates as substrates. The protein is DNA-directed RNA polymerase subunit beta' of Salinispora arenicola (strain CNS-205).